Consider the following 178-residue polypeptide: Acireductone dioxygenase 1 (178 aa).

Residues His84, His86, Glu90, and His130 each contribute to the Fe(2+) site. Positions 84, 86, 90, and 130 each coordinate Ni(2+).

Belongs to the acireductone dioxygenase (ARD) family. Fe(2+) serves as cofactor. The cofactor is Ni(2+).

Its subcellular location is the cytoplasm. It localises to the nucleus. The enzyme catalyses 1,2-dihydroxy-5-(methylsulfanyl)pent-1-en-3-one + O2 = 4-methylsulfanyl-2-oxobutanoate + formate + 2 H(+). It carries out the reaction 1,2-dihydroxy-5-(methylsulfanyl)pent-1-en-3-one + O2 = 3-(methylsulfanyl)propanoate + CO + formate + 2 H(+). The protein operates within amino-acid biosynthesis; L-methionine biosynthesis via salvage pathway; L-methionine from S-methyl-5-thio-alpha-D-ribose 1-phosphate: step 5/6. Its function is as follows. Catalyzes 2 different reactions between oxygen and the acireductone 1,2-dihydroxy-3-keto-5-methylthiopentene (DHK-MTPene) depending upon the metal bound in the active site. Fe-containing acireductone dioxygenase (Fe-ARD) produces formate and 2-keto-4-methylthiobutyrate (KMTB), the alpha-ketoacid precursor of methionine in the methionine recycle pathway. Ni-containing acireductone dioxygenase (Ni-ARD) produces methylthiopropionate, carbon monoxide and formate, and does not lie on the methionine recycle pathway. The polypeptide is Acireductone dioxygenase 1 (Coprinopsis cinerea (strain Okayama-7 / 130 / ATCC MYA-4618 / FGSC 9003) (Inky cap fungus)).